We begin with the raw amino-acid sequence, 245 residues long: tRNA (guanine-N(1)-)-methyltransferase (245 aa).

Residues Gly108 and 127-132 (IGDYVL) each bind S-adenosyl-L-methionine.

The protein belongs to the RNA methyltransferase TrmD family. As to quaternary structure, homodimer.

It is found in the cytoplasm. It carries out the reaction guanosine(37) in tRNA + S-adenosyl-L-methionine = N(1)-methylguanosine(37) in tRNA + S-adenosyl-L-homocysteine + H(+). In terms of biological role, specifically methylates guanosine-37 in various tRNAs. The polypeptide is tRNA (guanine-N(1)-)-methyltransferase (Lactobacillus delbrueckii subsp. bulgaricus (strain ATCC 11842 / DSM 20081 / BCRC 10696 / JCM 1002 / NBRC 13953 / NCIMB 11778 / NCTC 12712 / WDCM 00102 / Lb 14)).